A 616-amino-acid polypeptide reads, in one-letter code: MAEAKTHWLGASLSLILLIFLLATAEAASFQRNQLLQKEPDLRLENVQRFASPEMIRALEYIEKLRQQAHKEESSPDYNPYQGVSVPLQQKENSDLPESSRDSLSEDEWMKILLEALRQAENEPQSSLKENKPYTLNSEKNFPMDMPDDYETQQWPERKLEHMRFPPMYEENSRDNPFKRTNEIVEEQYTPQSLATLESVFQELGKLTGPNNQKRERVDEEQKLYTDDEDDIYKANNIAYEDVVGGEDWNPVEEKIESQTQEEVRDSKENIEKNEQINDEMKRSGQMGLQDEDLRKEGKDQLSEDVSKVIAYLKRLVNAVGSGKSQNGQNGERANRLFEKPLDSQSIYQLIELSRNLQIPPEDLIDMLKTGEKPNASVEPEQELEIPVDLDDISEVDLDHPDLFQNKMLSKNGYSKTPGRAVSEALPDGLSVEDILNLLGMENAANQKPPYFPNQYNREKILPRLPYGPGRAKANQLPKAVWMPDVENRQMAYDNLNDKDQELGEYLARMLVKYPEIMNSNQVKRVPSQGSSEDDLQEENQIEQAIKERLNQHSSQETDKLALVSKRLPVATPKSDDAPNRQYLDEDLLMKVLEYLNQEKAEKGREHIAKRAMENM.

Residues 1-27 (MAEAKTHWLGASLSLILLIFLLATAEA) form the signal peptide. The propeptide occupies 28–30 (ASF). Disordered regions lie at residues 68–104 (QAHK…RDSL) and 120–146 (AENE…PMDM). Over residues 92–104 (ENSDLPESSRDSL) the composition is skewed to basic and acidic residues. Residues 122-140 (NEPQSSLKENKPYTLNSEK) show a composition bias toward polar residues. Tyrosine 150 carries the post-translational modification Sulfotyrosine. Residues serine 173, serine 267, serine 431, serine 531, serine 554, and serine 555 each carry the phosphoserine modification. A compositionally biased stretch (basic and acidic residues) spans 255-283 (KIESQTQEEVRDSKENIEKNEQINDEMKR). The interval 255–290 (KIESQTQEEVRDSKENIEKNEQINDEMKRSGQMGLQ) is disordered. Positions 548 to 560 (ERLNQHSSQETDK) are enriched in basic and acidic residues. The segment at 548–582 (ERLNQHSSQETDKLALVSKRLPVATPKSDDAPNRQ) is disordered.

The protein belongs to the chromogranin/secretogranin protein family. In terms of assembly, interacts with Secretogranin III/SCG3.

The protein resides in the secreted. Functionally, neuroendocrine protein of the granin family that regulates the biogenesis of secretory granules. In Sus scrofa (Pig), this protein is Secretogranin-2 (SCG2).